The chain runs to 529 residues: hal-like protein DDB_G0273787/DDB_G0273081 (529 aa).

Residues 151–153 (ASG) constitute a cross-link (5-imidazolinone (Ala-Gly)). Serine 152 carries the post-translational modification 2,3-didehydroalanine (Ser).

This sequence belongs to the PAL/histidase family. In terms of processing, contains an active site 4-methylidene-imidazol-5-one (MIO), which is formed autocatalytically by cyclization and dehydration of residues Ala-Ser-Gly.

It localises to the cytoplasm. The catalysed reaction is L-histidine = trans-urocanate + NH4(+). The protein operates within amino-acid degradation; L-histidine degradation into L-glutamate; N-formimidoyl-L-glutamate from L-histidine: step 1/3. This Dictyostelium discoideum (Social amoeba) protein is hal-like protein DDB_G0273787/DDB_G0273081.